A 147-amino-acid chain; its full sequence is Hemoglobin larval subunit beta-1 (147 aa).

Positions 3 to 147 constitute a Globin domain; it reads HLSADEKSAI…LVAALSHGYF (145 aa). Heme b is bound by residues His64 and His93.

Belongs to the globin family. In terms of assembly, heterotetramer of two alpha chains and two beta chains. Red blood cells.

Its function is as follows. This is a larval (tadpole) beta-globin. The polypeptide is Hemoglobin larval subunit beta-1 (Xenopus laevis (African clawed frog)).